The primary structure comprises 148 residues: Nucleoside diphosphate kinase (148 aa).

Lys-9, Phe-57, Arg-85, Thr-91, Arg-102, and Asn-112 together coordinate ATP. The Pros-phosphohistidine intermediate role is filled by His-115.

It belongs to the NDK family. Mg(2+) is required as a cofactor.

It carries out the reaction a 2'-deoxyribonucleoside 5'-diphosphate + ATP = a 2'-deoxyribonucleoside 5'-triphosphate + ADP. It catalyses the reaction a ribonucleoside 5'-diphosphate + ATP = a ribonucleoside 5'-triphosphate + ADP. Its function is as follows. Major role in the synthesis of nucleoside triphosphates other than ATP. The ATP gamma phosphate is transferred to the NDP beta phosphate via a ping-pong mechanism, using a phosphorylated active-site intermediate. This chain is Nucleoside diphosphate kinase, found in Helianthus annuus (Common sunflower).